An 86-amino-acid polypeptide reads, in one-letter code: Large ribosomal subunit protein uL23 (86 aa).

This sequence belongs to the universal ribosomal protein uL23 family. Part of the 50S ribosomal subunit. Contacts protein L29.

Functionally, binds to 23S rRNA. One of the proteins that surrounds the polypeptide exit tunnel on the outside of the ribosome. The protein is Large ribosomal subunit protein uL23 of Aeropyrum pernix (strain ATCC 700893 / DSM 11879 / JCM 9820 / NBRC 100138 / K1).